The sequence spans 325 residues: Putative carboxypeptidase YocD (325 aa).

Residue S111 is the Nucleophile of the active site. Active-site charge relay system residues include E228 and H296.

The protein belongs to the peptidase S66 family.

In Bacillus subtilis (strain 168), this protein is Putative carboxypeptidase YocD (yocD).